Here is a 614-residue protein sequence, read N- to C-terminus: Dihydroxy-acid dehydratase (614 aa).

Aspartate 81 lines the Mg(2+) pocket. Position 122 (cysteine 122) interacts with [2Fe-2S] cluster. 2 residues coordinate Mg(2+): aspartate 123 and lysine 124. At lysine 124 the chain carries N6-carboxylysine. Cysteine 195 is a [2Fe-2S] cluster binding site. Glutamate 491 contacts Mg(2+). Serine 517 functions as the Proton acceptor in the catalytic mechanism.

Belongs to the IlvD/Edd family. In terms of assembly, homodimer. [2Fe-2S] cluster serves as cofactor. Mg(2+) is required as a cofactor.

It catalyses the reaction (2R)-2,3-dihydroxy-3-methylbutanoate = 3-methyl-2-oxobutanoate + H2O. The enzyme catalyses (2R,3R)-2,3-dihydroxy-3-methylpentanoate = (S)-3-methyl-2-oxopentanoate + H2O. Its pathway is amino-acid biosynthesis; L-isoleucine biosynthesis; L-isoleucine from 2-oxobutanoate: step 3/4. It participates in amino-acid biosynthesis; L-valine biosynthesis; L-valine from pyruvate: step 3/4. In terms of biological role, functions in the biosynthesis of branched-chain amino acids. Catalyzes the dehydration of (2R,3R)-2,3-dihydroxy-3-methylpentanoate (2,3-dihydroxy-3-methylvalerate) into 2-oxo-3-methylpentanoate (2-oxo-3-methylvalerate) and of (2R)-2,3-dihydroxy-3-methylbutanoate (2,3-dihydroxyisovalerate) into 2-oxo-3-methylbutanoate (2-oxoisovalerate), the penultimate precursor to L-isoleucine and L-valine, respectively. This chain is Dihydroxy-acid dehydratase, found in Actinobacillus succinogenes (strain ATCC 55618 / DSM 22257 / CCUG 43843 / 130Z).